We begin with the raw amino-acid sequence, 687 residues long: A-kinase anchor protein 8 (687 aa).

The segment at methionine 1–phenylalanine 195 is interaction with MCM2. The interval methionine 1–phenylalanine 210 is interaction with DPY30. Serine 72 carries the post-translational modification Phosphoserine. The segment at serine 104–serine 124 is disordered. Residue arginine 109 is modified to Asymmetric dimethylarginine; alternate. At arginine 109 the chain carries Omega-N-methylarginine; alternate. The segment covering arginine 109 to glycine 118 has biased composition (gly residues). Residues arginine 109–serine 201 are interaction with DDX5. The interval arginine 127–tyrosine 152 is nuclear matrix targeting site. A disordered region spans residues glycine 189–serine 221. Serine 199 carries the post-translational modification Phosphoserine. Omega-N-methylarginine occurs at positions 233 and 277. The tract at residues serine 278–aspartate 380 is disordered. Basic and acidic residues-rich tracts occupy residues arginine 281–glycine 295 and proline 312–serine 321. A Bipartite nuclear localization signal motif is present at residues arginine 287–lysine 304. Lysine 315 participates in a covalent cross-link: Glycyl lysine isopeptide (Lys-Gly) (interchain with G-Cter in SUMO2). 3 positions are modified to phosphoserine: serine 321, serine 326, and serine 337. A compositionally biased stretch (acidic residues) spans glutamate 322–alanine 332. The segment covering arginine 336–lysine 358 has biased composition (basic and acidic residues). Positions arginine 385–glutamate 448 are involved in chromatin-binding. C2H2 AKAP95-type zinc fingers lie at residues cysteine 390–histidine 412 and cysteine 479–histidine 502. An involved in condensin complex recruitment region spans residues serine 523–threonine 565. Threonine 553 carries the phosphothreonine modification. Lysine 563 participates in a covalent cross-link: Glycyl lysine isopeptide (Lys-Gly) (interchain with G-Cter in SUMO2). An RII-binding region spans residues glutamate 568–valine 585. Positions glutamate 572–glycine 589 are required for interaction with MYCBP. The disordered stretch occupies residues valine 606–glutamate 687. Residues arginine 633–asparagine 648 are compositionally biased toward basic and acidic residues. The span at glutamate 649–isoleucine 666 shows a compositional bias: low complexity. A Phosphoserine modification is found at serine 659.

The protein belongs to the AKAP95 family. As to quaternary structure, binds to dimeric RII-alpha regulatory subunit of PKA during mitosis. Interacts (via C-terminus) with FIGN. Interacts with NCAPD2, CCND1, CCND3, MCM2, RPS6KA1, PDE4A, CASP3. Interacts with DDX5, CCNE1. Interacts with NFKB1; detetcted in the cytoplasm. Interacts with MYCBP; MYCBP is translocated to the nucleus and the interaction prevents the association of the PKA catalytic subunit leading to suppression of PKA activity. Interacts with DPY30; mediating AKAP8 association with at least the MLL4/WBP7 HMT complex. Interacts with HDAC3; increased during mitosis. Interacts with GJA1; in the nucleus and in the nuclear membrane; the nuclear association increases with progress of cell cycle G1, S and G2 phase and decreases in M phase. Post-translationally, phosphorylated on tyrosine residues probably by SRC subfamily protein kinases; multiple phosphorylation is leading to dissociation from nuclear structures implicated in chromatin structural changes. As to expression, widely expressed. The protein has been detected in liver, fibroblasts, granulosa, myoblast, lymphoma and Sertoli cells.

It is found in the nucleus matrix. It localises to the nucleus. Its subcellular location is the nucleolus. The protein localises to the cytoplasm. Its function is as follows. Anchoring protein that mediates the subcellular compartmentation of cAMP-dependent protein kinase (PKA type II). Acts as an anchor for a PKA-signaling complex onto mitotic chromosomes, which is required for maintenance of chromosomes in a condensed form throughout mitosis. Recruits condensin complex subunit NCAPD2 to chromosomes required for chromatin condensation; the function appears to be independent from PKA-anchoring. May help to deliver cyclin D/E to CDK4 to facilitate cell cycle progression. Required for cell cycle G2/M transition and histone deacetylation during mitosis. In mitotic cells recruits HDAC3 to the vicinity of chromatin leading to deacetylation and subsequent phosphorylation at 'Ser-10' of histone H3; in this function may act redundantly with AKAP8L. Involved in nuclear retention of RPS6KA1 upon ERK activation thus inducing cell proliferation. May be involved in regulation of DNA replication by acting as scaffold for MCM2. Enhances HMT activity of the KMT2 family MLL4/WBP7 complex and is involved in transcriptional regulation. In a teratocarcinoma cell line is involved in retinoic acid-mediated induction of developmental genes implicating H3 'Lys-4' methylation. May be involved in recruitment of active CASP3 to the nucleus in apoptotic cells. May act as a carrier protein of GJA1 for its transport to the nucleus. May play a repressive role in the regulation of rDNA transcription. Preferentially binds GC-rich DNA in vitro. In cells, associates with ribosomal RNA (rRNA) chromatin, preferentially with rRNA promoter and transcribed regions. Involved in modulation of Toll-like receptor signaling. Required for the cAMP-dependent suppression of TNF-alpha in early stages of LPS-induced macrophage activation; the function probably implicates targeting of PKA to NFKB1. In Rattus norvegicus (Rat), this protein is A-kinase anchor protein 8 (Akap8).